The primary structure comprises 320 residues: 1-aminocyclopropane-1-carboxylate oxidase (320 aa).

The Fe2OG dioxygenase domain maps to 154–254; sequence PTFGTKVSNY…RMSLASFYNP (101 aa). Fe cation contacts are provided by His-178, Asp-180, and His-235.

The protein belongs to the iron/ascorbate-dependent oxidoreductase family. Requires Fe cation as cofactor.

It catalyses the reaction 1-aminocyclopropane-1-carboxylate + L-ascorbate + O2 = ethene + L-dehydroascorbate + hydrogen cyanide + CO2 + 2 H2O. It participates in alkene biosynthesis; ethylene biosynthesis via S-adenosyl-L-methionine; ethylene from S-adenosyl-L-methionine: step 2/2. The sequence is that of 1-aminocyclopropane-1-carboxylate oxidase (ACO) from Persea americana (Avocado).